The following is a 20-amino-acid chain: VPPGGLTXAQXFTIQHIXMT.

Histidine 16 serves as the catalytic Proton acceptor.

The protein belongs to the pancreatic ribonuclease family. Interacts with and forms a tight 1:1 complex with RNH1. Dimerization of two such complexes may occur.

It is found in the lysosome. The protein resides in the cytoplasmic granule. It catalyses the reaction an [RNA] containing cytidine + H2O = an [RNA]-3'-cytidine-3'-phosphate + a 5'-hydroxy-ribonucleotide-3'-[RNA].. The enzyme catalyses an [RNA] containing uridine + H2O = an [RNA]-3'-uridine-3'-phosphate + a 5'-hydroxy-ribonucleotide-3'-[RNA].. Its function is as follows. This is a non-secretory ribonuclease. It is a pyrimidine specific nuclease with a slight preference for U. Cytotoxin and helminthotoxin. Possesses a wide variety of biological activities. In Sus scrofa (Pig), this protein is Non-secretory ribonuclease (RNASE2).